Consider the following 387-residue polypeptide: MIRYYQQQLADLKAQNQFRQLPQLIHRGRFIQREDNTMLNMSSNDYLGLANNEALRQAFFTQYQDQLPALTSSSSRLLTGSFPIYDELESLMAQAFGRETALLFNSGYHANIGILPALADKKTLIVADKLVHASMIDGIRLAQCEFVRFRHHDYAHLEQILQKNDRTFERIIVVTESVFSMDGDCADLTQLVALKQRYPQVMLYVDEAHAIGVLGEKGLGLAEQQGCINQIDILVGTFGKALGSMGAYVICDQVIRDYLVNKMRPLIFSTALPPFNVAWTHFVFQQLPHLQAERAHLAQLSQHLRQAIVDIFQVPMPSESCIVPYILGDNELTVRTAQRLQQQGYYCLPIRPPTVPKGTSRIRFSLTADMQVAEVEQFIACLQELAE.

Arg-19 lines the substrate pocket. 107 to 108 lines the pyridoxal 5'-phosphate pocket; that stretch reads GY. His-132 serves as a coordination point for substrate. Pyridoxal 5'-phosphate-binding positions include Ser-180, 206-209, and 237-240; these read DEAH and TFGK. Lys-240 bears the N6-(pyridoxal phosphate)lysine mark. Thr-354 provides a ligand contact to substrate.

Belongs to the class-II pyridoxal-phosphate-dependent aminotransferase family. BioF subfamily. Homodimer. Pyridoxal 5'-phosphate is required as a cofactor.

It carries out the reaction 6-carboxyhexanoyl-[ACP] + L-alanine + H(+) = (8S)-8-amino-7-oxononanoate + holo-[ACP] + CO2. It functions in the pathway cofactor biosynthesis; biotin biosynthesis. In terms of biological role, catalyzes the decarboxylative condensation of pimeloyl-[acyl-carrier protein] and L-alanine to produce 8-amino-7-oxononanoate (AON), [acyl-carrier protein], and carbon dioxide. This Pasteurella multocida (strain Pm70) protein is Putative 8-amino-7-oxononanoate synthase (bioF).